The sequence spans 99 residues: Evasin P1162 (99 aa).

The first 28 residues, 1–28 (MEVKTFAFLQIAVCIAIGIELICAGTNA), serve as a signal peptide directing secretion. 3 cysteine pairs are disulfide-bonded: C40–C59, C44–C61, and C55–C72. N-linked (GlcNAc...) asparagine glycosylation is found at N43, N49, N58, and N85.

It is found in the secreted. In terms of biological role, salivary chemokine-binding protein which binds to host chemokines CXCL1, CXCL2, CXCL3, CXCL5 and CXCL8. This Ixodes ricinus (Common tick) protein is Evasin P1162.